A 1997-amino-acid polypeptide reads, in one-letter code: Receptor-type tyrosine-protein phosphatase beta (1997 aa).

A signal peptide spans 1-22 (MLSHGAGLALWITLSLLQTGLA). Fibronectin type-III domains follow at residues 23–111 (EPER…TDPL), 112–207 (PPAR…SPVK), 203–288 (PSPV…VRTA), 291–378 (EVSN…TFPD), 379–471 (KVAN…LAVL), 467–552 (PLAV…KGRT), 556–641 (QVTD…EGRT), 642–729 (VPSS…QERT), 730–829 (VPDK…TLRN), 819–906 (PEPV…GFTV), 909–1001 (AVKN…VQGV), 995–1083 (PASV…EGRT), 1087–1175 (AVTD…VPAS), 1173–1260 (PASV…SRTA), 1260–1356 (APSP…TKPD), 1357–1448 (KIQN…IDRP), and 1458–1554 (NEKD…EMES). Residues 23–1621 (EPERCNFTLA…ESEPLFGAIE (1599 aa)) lie on the Extracellular side of the membrane. 16 N-linked (GlcNAc...) asparagine glycosylation sites follow: Asn28, Asn53, Asn75, Asn172, Asn198, Asn267, Asn321, Asn414, Asn421, Asn479, Asn544, Asn574, Asn598, Asn652, Asn721, and Asn829. 10 N-linked (GlcNAc...) asparagine glycosylation sites follow: Asn1040, Asn1096, Asn1163, Asn1185, Asn1212, Asn1274, Asn1367, Asn1470, Asn1474, and Asn1518. Residues 1622–1642 (GVSAGLFLIGMLVAVVALLIC) form a helical membrane-spanning segment. Over 1643-1997 (RQKVSHGRER…YHRDPVYSRH (355 aa)) the chain is Cytoplasmic. The Tyrosine-protein phosphatase domain maps to 1703-1963 (LSKEYEELKD…VYLHQCVRDV (261 aa)). Residues Asp1870, 1904–1910 (CSAGVGR), and Gln1948 each bind substrate. The active-site Phosphocysteine intermediate is the Cys1904. Tyr1981 carries the post-translational modification Phosphotyrosine.

The protein belongs to the protein-tyrosine phosphatase family. Receptor class 3 subfamily. Monomer. Interacts with TEK. Interacts via fibronectin type-III 17 domain with CDH5. Detected in a complex with CNTN1 and NRCAM. Interacts (phosphorylated form) with FYN and GRB2. Interacts with IGFBP2.

The protein localises to the membrane. It catalyses the reaction O-phospho-L-tyrosyl-[protein] + H2O = L-tyrosyl-[protein] + phosphate. Its function is as follows. Plays an important role in blood vessel remodeling and angiogenesis. Not necessary for the initial formation of blood vessels, but is essential for their maintenance and remodeling. Can induce dephosphorylation of TEK/TIE2, CDH5/VE-cadherin and KDR/VEGFR-2. Regulates angiopoietin-TIE2 signaling in endothelial cells. Acts as a negative regulator of TIE2, and controls TIE2 driven endothelial cell proliferation, which in turn affects blood vessel remodeling during embryonic development and determines blood vessel size during perinatal growth. Essential for the maintenance of endothelial cell contact integrity and for the adhesive function of VE-cadherin in endothelial cells and this requires the presence of plakoglobin. This chain is Receptor-type tyrosine-protein phosphatase beta (PTPRB), found in Homo sapiens (Human).